The sequence spans 734 residues: Photosystem I P700 chlorophyll a apoprotein A2 (734 aa).

The next 8 membrane-spanning stretches (helical) occupy residues 46 to 69 (IFASHFGQLAIIFLWTSGNLFHVA), 135 to 158 (LYTGALSLLILSAIFLIAGWLHLQ), 175 to 199 (LNHHLSGLFGVSSLAWTGHLVHVAI), 273 to 291 (IAHHHLAIAVVFIIAGHMY), 330 to 353 (LHFQLGLALASLGVITSLVAQHMY), 369 to 395 (AALYTHHQYIAGFIMTGAFAHGAIFLI), 417 to 439 (AIISHLSWASLFLGFHTLGLYVH), and 517 to 535 (FLVHHAIALGLHTTTLILV). [4Fe-4S] cluster is bound by residues Cys-559 and Cys-568. Transmembrane regions (helical) follow at residues 575 to 596 (AFYSAVFWMLNTIGWVTLYWHW) and 643 to 665 (LSVWAWMFLFGHLVWAIGFMFLI). 3 residues coordinate chlorophyll a: His-654, Met-662, and Tyr-670. Trp-671 lines the phylloquinone pocket. A helical membrane pass occupies residues 707–727 (LVGLAHFSVGYIFTYAAFLIA).

The protein belongs to the PsaA/PsaB family. The PsaA/B heterodimer binds the P700 chlorophyll special pair and subsequent electron acceptors. PSI consists of a core antenna complex that captures photons, and an electron transfer chain that converts photonic excitation into a charge separation. The eukaryotic PSI reaction center is composed of at least 11 subunits. It depends on P700 is a chlorophyll a/chlorophyll a' dimer, A0 is one or more chlorophyll a, A1 is one or both phylloquinones and FX is a shared 4Fe-4S iron-sulfur center. as a cofactor.

It is found in the plastid. The protein localises to the chloroplast thylakoid membrane. The catalysed reaction is reduced [plastocyanin] + hnu + oxidized [2Fe-2S]-[ferredoxin] = oxidized [plastocyanin] + reduced [2Fe-2S]-[ferredoxin]. Its function is as follows. PsaA and PsaB bind P700, the primary electron donor of photosystem I (PSI), as well as the electron acceptors A0, A1 and FX. PSI is a plastocyanin-ferredoxin oxidoreductase, converting photonic excitation into a charge separation, which transfers an electron from the donor P700 chlorophyll pair to the spectroscopically characterized acceptors A0, A1, FX, FA and FB in turn. Oxidized P700 is reduced on the lumenal side of the thylakoid membrane by plastocyanin. The polypeptide is Photosystem I P700 chlorophyll a apoprotein A2 (Huperzia lucidula (Shining clubmoss)).